The sequence spans 121 residues: MLTDQEKIDLVNALDFVVIEPHTQSIYVHNDEKTNGVLAKVLHTISVDEYIESFKKGSLIDIFPAAMQEAGAEGFKDGQFVIMPKKFYVDQCYAMSKEIERLTNLNNLHNIKPNTYQGLIH.

The polypeptide is SPbeta prophage-derived uncharacterized protein YorW (yorW) (Bacillus subtilis (strain 168)).